The chain runs to 73 residues: Translational regulator CsrA (73 aa).

It belongs to the CsrA/RsmA family. In terms of assembly, homodimer; the beta-strands of each monomer intercalate to form a hydrophobic core, while the alpha-helices form wings that extend away from the core.

Its subcellular location is the cytoplasm. Its function is as follows. A translational regulator that binds mRNA to regulate translation initiation and/or mRNA stability. Usually binds in the 5'-UTR at or near the Shine-Dalgarno sequence preventing ribosome-binding, thus repressing translation. Its main target seems to be the major flagellin gene, while its function is anatagonized by FliW. The polypeptide is Translational regulator CsrA (Clostridium acetobutylicum (strain ATCC 824 / DSM 792 / JCM 1419 / IAM 19013 / LMG 5710 / NBRC 13948 / NRRL B-527 / VKM B-1787 / 2291 / W)).